The chain runs to 1137 residues: Protein sel-1 homolog 3 (1137 aa).

The disordered stretch occupies residues 1–42 (MQWRGAGLWWPRRRQQQQQQQPPPPAFGPPAAAMVPPSRGVS). 2 N-linked (GlcNAc...) asparagine glycosylation sites follow: Asn-206 and Asn-387. Sel1-like repeat units follow at residues 575–609 (HKAS…GQGS), 611–647 (RLSS…TKTP), 694–730 (AAAQ…LETE), 732–767 (PALI…SKGL), 768–800 (HQAV…EMGN), 801–839 (PDAS…QGGH), and 840–877 (IEGT…EKNG). A Phosphoserine modification is found at Ser-613. Asn-942 is a glycosylation site (N-linked (GlcNAc...) asparagine). The stretch at 952-988 (SFAYLKMGDLYYYGHQNQSQDLELSVQMYAQAALDGD) is one Sel1-like 8 repeat. A helical membrane pass occupies residues 1067-1087 (LIYFLGTFLLSVVIAWMVLYL). Positions 1100–1137 (AWVSADPTSSTPSPAVPPAADASDHDPPMMANGPEPRG) are disordered. Positions 1102 to 1120 (VSADPTSSTPSPAVPPAAD) are enriched in low complexity.

The protein localises to the membrane. The chain is Protein sel-1 homolog 3 (Sel1l3) from Mus musculus (Mouse).